The primary structure comprises 122 residues: Large ribosomal subunit protein uL14 (122 aa).

Belongs to the universal ribosomal protein uL14 family. In terms of assembly, part of the 50S ribosomal subunit. Forms a cluster with proteins L3 and L19. In the 70S ribosome, L14 and L19 interact and together make contacts with the 16S rRNA in bridges B5 and B8.

Its function is as follows. Binds to 23S rRNA. Forms part of two intersubunit bridges in the 70S ribosome. The chain is Large ribosomal subunit protein uL14 from Aliarcobacter butzleri (strain RM4018) (Arcobacter butzleri).